Consider the following 242-residue polypeptide: Urease accessory protein UreF (242 aa).

It belongs to the UreF family. In terms of assembly, ureD, UreF and UreG form a complex that acts as a GTP-hydrolysis-dependent molecular chaperone, activating the urease apoprotein by helping to assemble the nickel containing metallocenter of UreC. The UreE protein probably delivers the nickel.

It localises to the cytoplasm. Required for maturation of urease via the functional incorporation of the urease nickel metallocenter. The chain is Urease accessory protein UreF from Bradyrhizobium diazoefficiens (strain JCM 10833 / BCRC 13528 / IAM 13628 / NBRC 14792 / USDA 110).